A 524-amino-acid polypeptide reads, in one-letter code: Tyrosine-protein kinase HCK (524 aa).

The disordered stretch occupies residues 1–72 (MGGRSSCEDP…NNSNSMPPGF (72 aa)). Gly2 carries the N-myristoyl glycine lipid modification. Gly3 carries S-palmitoyl cysteine lipidation. Residues 29-38 (FLRDGSKASK) are compositionally biased toward basic and acidic residues. Residue Tyr50 is modified to Phosphotyrosine; by autocatalysis. A compositionally biased stretch (polar residues) spans 54–68 (PTSSSKLGPNNSNSM). In terms of domain architecture, SH3 spans 76-136 (SEDTIVVALY…PSNYVARVNS (61 aa)). Residues 142-239 (WFFKGISRKD…GLCQKLSVPC (98 aa)) form the SH2 domain. Thr200 is modified (phosphothreonine). A Phosphotyrosine modification is found at Tyr207. The 254-residue stretch at 260 to 513 (LQMEKKLGAG…YIQSVLDDFY (254 aa)) folds into the Protein kinase domain. Residues 266-274 (LGAGQFGEV) and Lys288 contribute to the ATP site. Asp379 serves as the catalytic Proton acceptor. Tyr409 is modified (phosphotyrosine; by autocatalysis). The residue at position 460 (Ser460) is a Phosphoserine. Tyr520 bears the Phosphotyrosine mark.

It belongs to the protein kinase superfamily. Tyr protein kinase family. SRC subfamily. As to quaternary structure, interacts with ADAM15. Interacts with FASLG. Interacts with ARRB1 and ARRB2. Interacts with FCGR1A; the interaction may be indirect. Interacts with IL6ST. Interacts (via SH3 domain) with ELMO1. Interacts (via SH3 domain) with TP73. Interacts with YAP1. Interacts with ABL1 and ITGB1, and thereby recruits ABL1 to activated ITGB1. Interacts (via SH2 domain) with FLT3 (tyrosine phosphorylated). Interacts with CBL. Interacts with VAV1, WAS and RAPGEF1. Interacts (via SH3 domain) with WDCP. Post-translationally, phosphorylated on several tyrosine residues. Autophosphorylated. Becomes rapidly phosphorylated upon activation of the immunoglobulin receptors FCGR1A and FCGR2A. Phosphorylation at Tyr-409 increases kinase activity. Phosphorylation at Tyr-520 inhibits kinase activity. Kinase activity is not required for phosphorylation at Tyr-520, suggesting that this site may be a target of other kinases. In terms of processing, ubiquitinated by CBL, leading to its degradation via the proteasome. Isoform 2 palmitoylation at position 2 requires prior myristoylation. Palmitoylation at position 3 is required for caveolar localization of isoform 2. In terms of tissue distribution, expressed predominantly in cells of the myeloid and B-lymphoid lineages.

The protein localises to the cytoplasmic vesicle. The protein resides in the secretory vesicle. Its subcellular location is the cytoplasm. It is found in the cytosol. It localises to the membrane. The protein localises to the caveola. The protein resides in the lysosome. Its subcellular location is the cell projection. It is found in the podosome membrane. It localises to the cell membrane. The protein localises to the cell junction. The protein resides in the focal adhesion. Its subcellular location is the cytoskeleton. It is found in the golgi apparatus. It localises to the nucleus. The enzyme catalyses L-tyrosyl-[protein] + ATP = O-phospho-L-tyrosyl-[protein] + ADP + H(+). Its activity is regulated as follows. Subject to autoinhibition, mediated by intramolecular interactions involving the SH2 and SH3 domains. Kinase activity is also regulated by phosphorylation at regulatory tyrosine residues. Phosphorylation at Tyr-409 is required for optimal activity. Phosphorylation at Tyr-520 inhibits kinase activity. Inhibited by PP1. In terms of biological role, non-receptor tyrosine-protein kinase found in hematopoietic cells that transmits signals from cell surface receptors and plays an important role in the regulation of innate immune responses, including neutrophil, monocyte, macrophage and mast cell functions, phagocytosis, cell survival and proliferation, cell adhesion and migration. Acts downstream of receptors that bind the Fc region of immunoglobulins, such as FCGR1A and FCGR2A, but also CSF3R, PLAUR, the receptors for IFNG, IL2, IL6 and IL8, and integrins, such as ITGB1 and ITGB2. During the phagocytic process, mediates mobilization of secretory lysosomes, degranulation, and activation of NADPH oxidase to bring about the respiratory burst. Plays a role in the release of inflammatory molecules. Promotes reorganization of the actin cytoskeleton and actin polymerization, formation of podosomes and cell protrusions. Inhibits TP73-mediated transcription activation and TP73-mediated apoptosis. Phosphorylates CBL in response to activation of immunoglobulin gamma Fc region receptors. Phosphorylates ADAM15, BCR, ELMO1, FCGR2A, GAB1, GAB2, RAPGEF1, STAT5B, TP73, VAV1 and WAS. The chain is Tyrosine-protein kinase HCK (Hck) from Mus musculus (Mouse).